A 595-amino-acid polypeptide reads, in one-letter code: Aspartate--tRNA(Asp/Asn) ligase (595 aa).

L-aspartate is bound at residue E178. The tract at residues 202-205 (QIFK) is aspartate. L-aspartate is bound at residue R224. Residues 224–226 (RDE) and Q233 each bind ATP. H458 contacts L-aspartate. Residue E488 coordinates ATP. R495 contributes to the L-aspartate binding site. 540–543 (GIDR) provides a ligand contact to ATP.

This sequence belongs to the class-II aminoacyl-tRNA synthetase family. Type 1 subfamily. In terms of assembly, homodimer.

It is found in the cytoplasm. It carries out the reaction tRNA(Asx) + L-aspartate + ATP = L-aspartyl-tRNA(Asx) + AMP + diphosphate. Functionally, aspartyl-tRNA synthetase with relaxed tRNA specificity since it is able to aspartylate not only its cognate tRNA(Asp) but also tRNA(Asn). Reaction proceeds in two steps: L-aspartate is first activated by ATP to form Asp-AMP and then transferred to the acceptor end of tRNA(Asp/Asn). The chain is Aspartate--tRNA(Asp/Asn) ligase from Acaryochloris marina (strain MBIC 11017).